Here is a 249-residue protein sequence, read N- to C-terminus: Diaminopimelate epimerase (249 aa).

Residues Asn-11 and Asn-60 each contribute to the substrate site. Residue Cys-69 is the Proton donor of the active site. Substrate is bound by residues 70–71 (GN), Asn-164, and 182–183 (ER). The active-site Proton acceptor is Cys-192. Substrate is bound at residue 193-194 (GT).

This sequence belongs to the diaminopimelate epimerase family. In terms of assembly, homodimer.

It is found in the cytoplasm. It catalyses the reaction (2S,6S)-2,6-diaminopimelate = meso-2,6-diaminopimelate. It functions in the pathway amino-acid biosynthesis; L-lysine biosynthesis via DAP pathway; DL-2,6-diaminopimelate from LL-2,6-diaminopimelate: step 1/1. Its function is as follows. Catalyzes the stereoinversion of LL-2,6-diaminopimelate (L,L-DAP) to meso-diaminopimelate (meso-DAP), a precursor of L-lysine and an essential component of the bacterial peptidoglycan. This Campylobacter lari (strain RM2100 / D67 / ATCC BAA-1060) protein is Diaminopimelate epimerase.